A 62-amino-acid chain; its full sequence is Glucagon (62 aa).

It belongs to the glucagon family.

The protein localises to the secreted. In terms of biological role, promotes hydrolysis of glycogen and lipids, and raises the blood sugar level. The chain is Glucagon (gcg) from Scyliorhinus canicula (Small-spotted catshark).